We begin with the raw amino-acid sequence, 82 residues long: Protein Rv1078A (82 aa).

Residues 35–54 show a composition bias toward basic residues; it reads GGPTRRLRRRPAVTRRRRPD. The interval 35 to 82 is disordered; that stretch reads GGPTRRLRRRPAVTRRRRPDRRFVRCRPSPTRRGLPGCWRHSSTGPHT.

It localises to the cytoplasm. The protein is Protein Rv1078A of Mycobacterium tuberculosis (strain ATCC 25618 / H37Rv).